The following is a 52-amino-acid chain: Conotoxin-like peptide 2 (52 aa).

Positions 1-18 (MKFSTILLLVCPTVALSA) are cleaved as a signal peptide. 3 disulfides stabilise this stretch: C24/C38, C31/C42, and C37/C49.

It is found in the secreted. This is Conotoxin-like peptide 2 (CTL-2) from Orgyia pseudotsugata (Douglas-fir tussock moth).